The primary structure comprises 148 residues: Large-conductance mechanosensitive channel (148 aa).

2 helical membrane passes run 9–29 and 79–99; these read AFAVKGNVVDMAVGIIIGAAF and IQTVIDFIIVAFAIFMGVKAI.

This sequence belongs to the MscL family. Homopentamer.

It localises to the cell inner membrane. Channel that opens in response to stretch forces in the membrane lipid bilayer. May participate in the regulation of osmotic pressure changes within the cell. The sequence is that of Large-conductance mechanosensitive channel from Pseudomonas syringae pv. tomato (strain ATCC BAA-871 / DC3000).